The sequence spans 902 residues: Methionine--tRNA ligase, cytoplasmic (902 aa).

The GST C-terminal domain occupies 74-212 (GWEQDDLTNQ…QKQPQPQPPP (139 aa)). The 'HIGH' region motif lies at 275–285 (PYVNNVPHLGN). A 'KMSKS' region motif is present at residues 595–599 (KFSKS). Residue Lys598 participates in ATP binding. Ser827 carries the phosphoserine modification. Residue Thr837 is modified to Phosphothreonine. One can recognise a WHEP-TRS domain in the interval 843–899 (HIQTLTDEVTKQGNVVRELKAQKADKNQVAAEVAKLLDLKKQLALAEGKPIETPKGK).

It belongs to the class-I aminoacyl-tRNA synthetase family. As to quaternary structure, monomer. Part of a multisubunit complex that groups tRNA ligases for Arg (RARS1), Asp (DARS1), Gln (QARS1), Ile (IARS1), Leu (LARS1), Lys (KARS1), Met (MARS1) the bifunctional ligase for Glu and Pro (EPRS1) and the auxiliary subunits AIMP1/p43, AIMP2/p38 and EEF1E1/p18. Forms a linear complex that contains MARS1, EEF1E1, EPRS1 and AIMP2 that is at the core of the multisubunit complex.

It localises to the cytoplasm. The protein localises to the cytosol. Its subcellular location is the nucleus. The protein resides in the nucleolus. The catalysed reaction is tRNA(Met) + L-methionine + ATP = L-methionyl-tRNA(Met) + AMP + diphosphate. Its function is as follows. Catalyzes the specific attachment of an amino acid to its cognate tRNA in a 2 step reaction: the amino acid (AA) is first activated by ATP to form AA-AMP and then transferred to the acceptor end of the tRNA. Plays a role in the synthesis of ribosomal RNA in the nucleolus. The sequence is that of Methionine--tRNA ligase, cytoplasmic (Mars1) from Mus musculus (Mouse).